The following is a 456-amino-acid chain: Histidine--tRNA ligase (456 aa).

This sequence belongs to the class-II aminoacyl-tRNA synthetase family. In terms of assembly, homodimer.

The protein localises to the cytoplasm. It catalyses the reaction tRNA(His) + L-histidine + ATP = L-histidyl-tRNA(His) + AMP + diphosphate + H(+). This is Histidine--tRNA ligase from Borreliella afzelii (strain PKo) (Borrelia afzelii).